We begin with the raw amino-acid sequence, 204 residues long: Holliday junction resolvase RecU (204 aa).

The interval 1 to 24 (MTIHYPNGQQPVQHYNTHNELPTP) is disordered. Polar residues predominate over residues 7–24 (NGQQPVQHYNTHNELPTP). Mg(2+) is bound by residues Thr-87, Asp-89, Asp-102, and Gln-121.

It belongs to the RecU family. Requires Mg(2+) as cofactor.

It is found in the cytoplasm. The catalysed reaction is Endonucleolytic cleavage at a junction such as a reciprocal single-stranded crossover between two homologous DNA duplexes (Holliday junction).. In terms of biological role, endonuclease that resolves Holliday junction intermediates in genetic recombination. Cleaves mobile four-strand junctions by introducing symmetrical nicks in paired strands. Promotes annealing of linear ssDNA with homologous dsDNA. Required for DNA repair, homologous recombination and chromosome segregation. This chain is Holliday junction resolvase RecU, found in Limosilactobacillus reuteri (strain DSM 20016) (Lactobacillus reuteri).